The primary structure comprises 251 residues: Ubiquinone/menaquinone biosynthesis C-methyltransferase UbiE (251 aa).

S-adenosyl-L-methionine-binding positions include threonine 74, aspartate 95, and 123–124; that span reads NA.

Belongs to the class I-like SAM-binding methyltransferase superfamily. MenG/UbiE family.

The enzyme catalyses a 2-demethylmenaquinol + S-adenosyl-L-methionine = a menaquinol + S-adenosyl-L-homocysteine + H(+). The catalysed reaction is a 2-methoxy-6-(all-trans-polyprenyl)benzene-1,4-diol + S-adenosyl-L-methionine = a 5-methoxy-2-methyl-3-(all-trans-polyprenyl)benzene-1,4-diol + S-adenosyl-L-homocysteine + H(+). It functions in the pathway quinol/quinone metabolism; menaquinone biosynthesis; menaquinol from 1,4-dihydroxy-2-naphthoate: step 2/2. Its pathway is cofactor biosynthesis; ubiquinone biosynthesis. In terms of biological role, methyltransferase required for the conversion of demethylmenaquinol (DMKH2) to menaquinol (MKH2) and the conversion of 2-polyprenyl-6-methoxy-1,4-benzoquinol (DDMQH2) to 2-polyprenyl-3-methyl-6-methoxy-1,4-benzoquinol (DMQH2). This is Ubiquinone/menaquinone biosynthesis C-methyltransferase UbiE from Pseudoalteromonas translucida (strain TAC 125).